The chain runs to 140 residues: uncharacterized protein (140 aa).

This is an uncharacterized protein from Synechococcus sp. (strain WH8020).